Here is a 696-residue protein sequence, read N- to C-terminus: MAREFKIEDYRNFGIMAHIDAGKTTTTERILYYTGKSHKIGEVHDGAATMDWMEQEQERGITITSAATTTFWKGRDEKLRRFNIIDTPGHVDFTIEVERSLRVLDGAIALLDANAGVEPQTETVWRQADKYHVPRMIFCNKMDKIGADFYRSVEMVKSRLGATAVVMQLPIGAESDFKGVIDLVEMKALIWRDETLGAAWDVVEIPAEFKEKAEEYREKLIEAAVEMDEGAMERYLEGEMPSIEEIRALVRKGTIEVKFFPMFCGSAFKNKGVQPLLDAVVDFLPSPIDIPAIKGVDAKTEEPIERHAEDSEPLSMLAFKIMNDPFVGSLTFCRIYSGVLKKGVSLENTVKGKRERIGRMLQMHANSREDIEEAYAGDIVALAGLKETTTGDTLCDPLKPVILERMEFPEPVIQIAIEPKTKGDQEKMGLALNRLAAEDPSFRVKTDEESGQTIIAGMGELHLDIIVDRMKREFKVEANIGAPQVAYRETITKTAEIDYTHKKQTGGSGQFARVKIVFEPNPDGEDFLFESKIVGGSVPKEYVPGVQKGIESVLSSGPIAGFPMLGVKATLVDGAYHDVDSSVLAFEIAARAAFREGAQKAGAQLLEPIMKVEVVTPEEYVGSVIGDLNSRRGQIQGQEARGVAVVVNAMVPLANMFKYVDNLRSMSQGRAQYTMQFDHYEPVPSAVAQEIQKKFA.

Residues 8-288 form the tr-type G domain; it reads EDYRNFGIMA…AVVDFLPSPI (281 aa). GTP contacts are provided by residues 17 to 24, 86 to 90, and 140 to 143; these read AHIDAGKT, DTPGH, and NKMD.

The protein belongs to the TRAFAC class translation factor GTPase superfamily. Classic translation factor GTPase family. EF-G/EF-2 subfamily.

It localises to the cytoplasm. In terms of biological role, catalyzes the GTP-dependent ribosomal translocation step during translation elongation. During this step, the ribosome changes from the pre-translocational (PRE) to the post-translocational (POST) state as the newly formed A-site-bound peptidyl-tRNA and P-site-bound deacylated tRNA move to the P and E sites, respectively. Catalyzes the coordinated movement of the two tRNA molecules, the mRNA and conformational changes in the ribosome. This chain is Elongation factor G, found in Chelativorans sp. (strain BNC1).